The chain runs to 55 residues: Photosystem II reaction center protein K (55 aa).

Residues 1–18 (MFNIYLENAFYLNGITFA) constitute a propeptide that is removed on maturation. The helical transmembrane segment at 26–46 (IFDPIVDVMPIIPLFFFLLAF) threads the bilayer.

Belongs to the PsbK family. PSII is composed of 1 copy each of membrane proteins PsbA, PsbB, PsbC, PsbD, PsbE, PsbF, PsbH, PsbI, PsbJ, PsbK, PsbL, PsbM, PsbT, PsbX, PsbY, PsbZ, Psb30/Ycf12, at least 3 peripheral proteins of the oxygen-evolving complex and a large number of cofactors. It forms dimeric complexes.

The protein localises to the plastid. The protein resides in the chloroplast thylakoid membrane. In terms of biological role, one of the components of the core complex of photosystem II (PSII). PSII is a light-driven water:plastoquinone oxidoreductase that uses light energy to abstract electrons from H(2)O, generating O(2) and a proton gradient subsequently used for ATP formation. It consists of a core antenna complex that captures photons, and an electron transfer chain that converts photonic excitation into a charge separation. The sequence is that of Photosystem II reaction center protein K from Marchantia polymorpha (Common liverwort).